A 711-amino-acid polypeptide reads, in one-letter code: MLNPIVRKFQYGQHTVTLETGMMARQATAAVMVSMDDTAVFVTVVGQKKAKPGQDFFPLTVNYQERTYAAGRIPGSFFRREGRPSEGETLIARLIDRPIRPLFPEGFVNEVQVIATVVSVNPQVNPDIVAMIGASAALSLSGIPFNGPIGAARVGYINDQYVLNPTQDELKESKLDLVVAGTEAAVLMVESEAELLSEDQMLGAVVFGHEQQQVVIQNINELVKEAGKPRWDWQPEPVNEALNARVAALAEARLSDAYRITDKQERYAQVDVIKSETIATLLAEDETLDENELGEILHAIEKNVVRSRVLAGEPRIDGREKDMIRGLDVRTGVLPRTHGSALFTRGETQALVTATLGTARDAQVLDELMGERTDTFLFHYNFPPYSVGETGMVGSPKRREIGHGRLAKRGVLAVMPDMDKFPYTVRVVSEITESNGSSSMASVCGASLALMDAGVPIKAAVAGIAMGLVKEGDNYVVLSDILGDEDHLGDMDFKVAGSREGISALQMDIKIEGITKEIMQVALNQAKGARLHILGVMEQAINAPRGDISEFAPRIHTIKINPDKIKDVIGKGGSVIRALTEETGTTIEIEDDGTVKIAATDGEKAKHAIRRIEEITAEIEVGRVYTGKVTRIVDFGAFVAIGGGKEGLVHISQIADKRVEKVTDYLQMGQEVPVKVLEVDRQGRIRLSIKEATEQSQPAAAPEAPAAEQGE.

Mg(2+) contacts are provided by Asp-486 and Asp-492. A KH domain is found at 553-612 (PRIHTIKINPDKIKDVIGKGGSVIRALTEETGTTIEIEDDGTVKIAATDGEKAKHAIRRI). In terms of domain architecture, S1 motif spans 622–690 (GRVYTGKVTR…RQGRIRLSIK (69 aa)). Residues 689–711 (IKEATEQSQPAAAPEAPAAEQGE) are disordered. The segment covering 694–711 (EQSQPAAAPEAPAAEQGE) has biased composition (low complexity).

It belongs to the polyribonucleotide nucleotidyltransferase family. In terms of assembly, component of the RNA degradosome, which is a multiprotein complex involved in RNA processing and mRNA degradation. Mg(2+) is required as a cofactor.

The protein localises to the cytoplasm. The catalysed reaction is RNA(n+1) + phosphate = RNA(n) + a ribonucleoside 5'-diphosphate. Involved in mRNA degradation. Catalyzes the phosphorolysis of single-stranded polyribonucleotides processively in the 3'- to 5'-direction. This is Polyribonucleotide nucleotidyltransferase from Shigella flexneri serotype 5b (strain 8401).